Consider the following 409-residue polypeptide: Pyrophosphate--fructose 6-phosphate 1-phosphotransferase (409 aa).

Gly14 contributes to the diphosphate binding site. Mg(2+) is bound at residue Asp123. Substrate contacts are provided by residues Thr151 to Asp153, Met196 to Arg198, Glu268, and Tyr325 to Arg328. Asp153 functions as the Proton acceptor in the catalytic mechanism.

Belongs to the phosphofructokinase type A (PFKA) family. PPi-dependent PFK group II subfamily. Clade 'P' sub-subfamily. In terms of assembly, homodimer. Requires Mg(2+) as cofactor.

The protein resides in the cytoplasm. It catalyses the reaction beta-D-fructose 6-phosphate + diphosphate = beta-D-fructose 1,6-bisphosphate + phosphate + H(+). It participates in carbohydrate degradation; glycolysis; D-glyceraldehyde 3-phosphate and glycerone phosphate from D-glucose: step 3/4. With respect to regulation, non-allosteric. Functionally, catalyzes the phosphorylation of D-fructose 6-phosphate, the first committing step of glycolysis. Uses inorganic phosphate (PPi) as phosphoryl donor instead of ATP like common ATP-dependent phosphofructokinases (ATP-PFKs), which renders the reaction reversible, and can thus function both in glycolysis and gluconeogenesis. Consistently, PPi-PFK can replace the enzymes of both the forward (ATP-PFK) and reverse (fructose-bisphosphatase (FBPase)) reactions. The protein is Pyrophosphate--fructose 6-phosphate 1-phosphotransferase of Methylomonas methanica.